Consider the following 492-residue polypeptide: MSIDLNWETVTGGPDGQELADQIRDFIHTKFQSVPLPRFIKSVTVHDFQFGVIPPELELKDITDPLPDFYEDHVDSDVASDDSEGEEDAVDNNLAPPSQGERHQRTDDSEALGGDVRNLGHLPPHLMFGSPGGPGGPGMGSLRNGDMGSPFMRVSTPGIPGGTSNLHYFHSHLGGGLSGTQTPLAAVAGAQHLSTANWLEGHGHSSSVPNLTHFGNPGGAGTSPRRQPERNHSRNPSQGSISVADLNPNSLAPPSSSTLGVPSLKEKHSTTPAPGSATALSGSNEQQQQQQPQDNDDGHPRWREQRIDDMQAVFRIRYAGDVKLLLTADILLDYPMPSFVGIPVRLSITGLTFDGVGVLAKIRKRVHFCFLSPEDAAAAVGGDGEEGLSSPGEGPSQAQGQGQGQGQGQGQGQTPGAGQQKQQKKQAGWVGSGNTKLGGLLQEIRVESEIGQRESGRQSLKNVGKVERFVLEQVRRIFEEEFVYPSFWTFLV.

The region spanning 1–492 (MSIDLNWETV…VYPSFWTFLV (492 aa)) is the SMP-LTD domain. Disordered stretches follow at residues 68–158 (DFYE…STPG), 199–301 (LEGH…GHPR), and 379–434 (AVGG…GSGN). Over residues 78-90 (VASDDSEGEEDAV) the composition is skewed to acidic residues. A compositionally biased stretch (gly residues) spans 130–139 (SPGGPGGPGM). Residues 246–257 (LNPNSLAPPSSS) show a composition bias toward low complexity. A compositionally biased stretch (polar residues) spans 270-285 (TTPAPGSATALSGSNE). The span at 387-400 (GLSSPGEGPSQAQG) shows a compositional bias: low complexity. The span at 401-415 (QGQGQGQGQGQGQTP) shows a compositional bias: gly residues. The segment covering 416-428 (GAGQQKQQKKQAG) has biased composition (low complexity).

It belongs to the MDM12 family. In terms of assembly, component of the ER-mitochondria encounter structure (ERMES) or MDM complex, composed of MMM1, MDM10, MDM12 and MDM34. An MMM1 homodimer associates with one molecule of MDM12 on each side in a pairwise head-to-tail manner, and the SMP-LTD domains of MMM1 and MDM12 generate a continuous hydrophobic tunnel for phospholipid trafficking.

Its subcellular location is the mitochondrion outer membrane. The protein resides in the endoplasmic reticulum membrane. In terms of biological role, component of the ERMES/MDM complex, which serves as a molecular tether to connect the endoplasmic reticulum (ER) and mitochondria. Components of this complex are involved in the control of mitochondrial shape and protein biogenesis, and function in nonvesicular lipid trafficking between the ER and mitochondria. MDM12 is required for the interaction of the ER-resident membrane protein MMM1 and the outer mitochondrial membrane-resident beta-barrel protein MDM10. The MDM12-MMM1 subcomplex functions in the major beta-barrel assembly pathway that is responsible for biogenesis of all mitochondrial outer membrane beta-barrel proteins, and acts in a late step after the SAM complex. The MDM10-MDM12-MMM1 subcomplex further acts in the TOM40-specific pathway after the action of the MDM12-MMM1 complex. Essential for establishing and maintaining the structure of mitochondria and maintenance of mtDNA nucleoids. The polypeptide is Mitochondrial distribution and morphology protein 12 (Chaetomium globosum (strain ATCC 6205 / CBS 148.51 / DSM 1962 / NBRC 6347 / NRRL 1970) (Soil fungus)).